A 333-amino-acid polypeptide reads, in one-letter code: Holliday junction branch migration complex subunit RuvB (333 aa).

The large ATPase domain (RuvB-L) stretch occupies residues 1 to 181; the sequence is MNDILNKEPM…FGISSHMEYY (181 aa). Residues Leu20, Arg21, Gly62, Lys65, Thr66, Thr67, 128–130, Arg171, Tyr181, and Arg218 each bind ATP; that span reads EDF. A Mg(2+)-binding site is contributed by Thr66. Residues 182-252 are small ATPAse domain (RuvB-S); it reads QERDLEEIVK…ITDKALTILD (71 aa). Residues 255-333 form a head domain (RuvB-H) region; sequence AAGLDYIDQK…HLGYVYNEEE (79 aa). Residues Arg291, Arg310, and Arg315 each coordinate DNA.

This sequence belongs to the RuvB family. In terms of assembly, homohexamer. Forms an RuvA(8)-RuvB(12)-Holliday junction (HJ) complex. HJ DNA is sandwiched between 2 RuvA tetramers; dsDNA enters through RuvA and exits via RuvB. An RuvB hexamer assembles on each DNA strand where it exits the tetramer. Each RuvB hexamer is contacted by two RuvA subunits (via domain III) on 2 adjacent RuvB subunits; this complex drives branch migration. In the full resolvosome a probable DNA-RuvA(4)-RuvB(12)-RuvC(2) complex forms which resolves the HJ.

It localises to the cytoplasm. It catalyses the reaction ATP + H2O = ADP + phosphate + H(+). Its function is as follows. The RuvA-RuvB-RuvC complex processes Holliday junction (HJ) DNA during genetic recombination and DNA repair, while the RuvA-RuvB complex plays an important role in the rescue of blocked DNA replication forks via replication fork reversal (RFR). RuvA specifically binds to HJ cruciform DNA, conferring on it an open structure. The RuvB hexamer acts as an ATP-dependent pump, pulling dsDNA into and through the RuvAB complex. RuvB forms 2 homohexamers on either side of HJ DNA bound by 1 or 2 RuvA tetramers; 4 subunits per hexamer contact DNA at a time. Coordinated motions by a converter formed by DNA-disengaged RuvB subunits stimulates ATP hydrolysis and nucleotide exchange. Immobilization of the converter enables RuvB to convert the ATP-contained energy into a lever motion, pulling 2 nucleotides of DNA out of the RuvA tetramer per ATP hydrolyzed, thus driving DNA branch migration. The RuvB motors rotate together with the DNA substrate, which together with the progressing nucleotide cycle form the mechanistic basis for DNA recombination by continuous HJ branch migration. Branch migration allows RuvC to scan DNA until it finds its consensus sequence, where it cleaves and resolves cruciform DNA. This chain is Holliday junction branch migration complex subunit RuvB, found in Lactococcus lactis subsp. cremoris (strain SK11).